Reading from the N-terminus, the 124-residue chain is UPF0102 protein Rcas_2007 (124 aa).

It belongs to the UPF0102 family.

The polypeptide is UPF0102 protein Rcas_2007 (Roseiflexus castenholzii (strain DSM 13941 / HLO8)).